The sequence spans 153 residues: Actin-related protein 2/3 complex subunit 5-like protein (153 aa).

Serine 64 is subject to Phosphoserine.

Belongs to the ARPC5 family. May be a component of the Arp2/3 complex in which it may replace ARPC5.

The protein resides in the cytoplasm. Its subcellular location is the cytoskeleton. Its function is as follows. May function as component of the Arp2/3 complex which is involved in regulation of actin polymerization and together with an activating nucleation-promoting factor (NPF) mediates the formation of branched actin networks. This Rattus norvegicus (Rat) protein is Actin-related protein 2/3 complex subunit 5-like protein (Arpc5l).